We begin with the raw amino-acid sequence, 92 residues long: Small ribosomal subunit protein uS17 (92 aa).

This sequence belongs to the universal ribosomal protein uS17 family. In terms of assembly, part of the 30S ribosomal subunit.

In terms of biological role, one of the primary rRNA binding proteins, it binds specifically to the 5'-end of 16S ribosomal RNA. In Cupriavidus metallidurans (strain ATCC 43123 / DSM 2839 / NBRC 102507 / CH34) (Ralstonia metallidurans), this protein is Small ribosomal subunit protein uS17.